Reading from the N-terminus, the 450-residue chain is Probable glycine dehydrogenase (decarboxylating) subunit 1 (450 aa).

The protein belongs to the GcvP family. N-terminal subunit subfamily. As to quaternary structure, the glycine cleavage system is composed of four proteins: P, T, L and H. In this organism, the P 'protein' is a heterodimer of two subunits.

The catalysed reaction is N(6)-[(R)-lipoyl]-L-lysyl-[glycine-cleavage complex H protein] + glycine + H(+) = N(6)-[(R)-S(8)-aminomethyldihydrolipoyl]-L-lysyl-[glycine-cleavage complex H protein] + CO2. Its function is as follows. The glycine cleavage system catalyzes the degradation of glycine. The P protein binds the alpha-amino group of glycine through its pyridoxal phosphate cofactor; CO(2) is released and the remaining methylamine moiety is then transferred to the lipoamide cofactor of the H protein. In Staphylococcus haemolyticus (strain JCSC1435), this protein is Probable glycine dehydrogenase (decarboxylating) subunit 1.